We begin with the raw amino-acid sequence, 378 residues long: Acetylornithine deacetylase (378 aa).

Zn(2+) is bound at residue histidine 76. The active site involves aspartate 78. Aspartate 108 provides a ligand contact to Zn(2+). Glutamate 140 is an active-site residue. Residues glutamate 141, glutamate 165, and histidine 351 each coordinate Zn(2+).

Belongs to the peptidase M20A family. ArgE subfamily. In terms of assembly, homodimer. Zn(2+) serves as cofactor. It depends on Co(2+) as a cofactor. The cofactor is glutathione.

The protein resides in the cytoplasm. It catalyses the reaction N(2)-acetyl-L-ornithine + H2O = L-ornithine + acetate. It participates in amino-acid biosynthesis; L-arginine biosynthesis; L-ornithine from N(2)-acetyl-L-ornithine (linear): step 1/1. Catalyzes the hydrolysis of the amide bond of N(2)-acetylated L-amino acids. Cleaves the acetyl group from N-acetyl-L-ornithine to form L-ornithine, an intermediate in L-arginine biosynthesis pathway, and a branchpoint in the synthesis of polyamines. This Vibrio vulnificus (strain CMCP6) protein is Acetylornithine deacetylase.